The primary structure comprises 281 residues: Elongation factor Ts (281 aa).

Positions 80–83 (TDFV) are involved in Mg(2+) ion dislocation from EF-Tu.

Belongs to the EF-Ts family.

It is found in the cytoplasm. In terms of biological role, associates with the EF-Tu.GDP complex and induces the exchange of GDP to GTP. It remains bound to the aminoacyl-tRNA.EF-Tu.GTP complex up to the GTP hydrolysis stage on the ribosome. In Vibrio parahaemolyticus serotype O3:K6 (strain RIMD 2210633), this protein is Elongation factor Ts.